Here is a 1275-residue protein sequence, read N- to C-terminus: Myosin-1 (1275 aa).

Residues 35–727 (VGVSDLTLLS…TLFAMEDMRD (693 aa)) enclose the Myosin motor domain. 128-135 (GESGAGKT) lines the ATP pocket. At Ser-361 the chain carries Phosphoserine. An actin-binding region spans residues 410–493 (TIGILDIYGF…PGLFAALNDS (84 aa)). 2 IQ domains span residues 731 to 751 (HNMA…KEDA) and 752 to 777 (ARLI…YGNG). One can recognise a TH1 domain in the interval 785-974 (RRRMSMLGSR…KSGTVSVRPG (190 aa)). Disordered regions lie at residues 966-1064 (SGTV…LNNN), 1089-1128 (QNHN…AKPK), 1183-1230 (SECP…GGLS), and 1251-1275 (IADA…DDDW). The span at 977 to 992 (PDSQNPKRPRATSSKV) shows a compositional bias: polar residues. Residues 1095-1106 (PTAPSRPAKKAA) are compositionally biased toward low complexity. The span at 1107-1121 (PAPPVKKTAPPPPPS) shows a compositional bias: pro residues. An SH3 domain is found at 1127-1187 (PKWPTFKANY…PTAYISECPP (61 aa)). Over residues 1254-1263 (ALKKRSATRD) the composition is skewed to basic and acidic residues. Positions 1264–1275 (SDDEEEDDDDDW) are enriched in acidic residues.

The protein belongs to the TRAFAC class myosin-kinesin ATPase superfamily. Myosin family. In terms of processing, phosphorylation of the TEDS site (Ser-361) is required for the polarization of the actin cytoskeleton. Phosphorylation probably activates the myosin-I ATPase activity.

The protein resides in the cytoplasm. It localises to the cytoskeleton. Its subcellular location is the actin patch. Functionally, type-I myosin implicated in the organization of the actin cytoskeleton. Required for proper actin cytoskeleton polarization. At the cell cortex, assembles in patch-like structures together with proteins from the actin-polymerizing machinery and promotes actin assembly. Functions as actin nucleation-promoting factor (NPF) for the Arp2/3 complex. This is Myosin-1 (MYO1) from Meyerozyma guilliermondii (strain ATCC 6260 / CBS 566 / DSM 6381 / JCM 1539 / NBRC 10279 / NRRL Y-324) (Yeast).